A 64-amino-acid polypeptide reads, in one-letter code: Beta sliding clamp (64 aa).

Belongs to the beta sliding clamp family. As to quaternary structure, forms a ring-shaped head-to-tail homodimer around DNA which binds and tethers DNA polymerases and other proteins to the DNA. The DNA replisome complex has a single clamp-loading complex (3 tau and 1 each of delta, delta', psi and chi subunits) which binds 3 Pol III cores (1 core on the leading strand and 2 on the lagging strand) each with a beta sliding clamp dimer. Additional proteins in the replisome are other copies of gamma, psi and chi, Ssb, DNA helicase and RNA primase.

It is found in the cytoplasm. In terms of biological role, confers DNA tethering and processivity to DNA polymerases and other proteins. Acts as a clamp, forming a ring around DNA (a reaction catalyzed by the clamp-loading complex) which diffuses in an ATP-independent manner freely and bidirectionally along dsDNA. Initially characterized for its ability to contact the catalytic subunit of DNA polymerase III (Pol III), a complex, multichain enzyme responsible for most of the replicative synthesis in bacteria; Pol III exhibits 3'-5' exonuclease proofreading activity. The beta chain is required for initiation of replication as well as for processivity of DNA replication. This Actinobacillus pleuropneumoniae (Haemophilus pleuropneumoniae) protein is Beta sliding clamp (dnaN).